The following is a 156-amino-acid chain: ATP synthase subunit b (156 aa).

A helical membrane pass occupies residues 7–27 (LFVQAIVFLILVWFTMQFVWP).

The protein belongs to the ATPase B chain family. As to quaternary structure, F-type ATPases have 2 components, F(1) - the catalytic core - and F(0) - the membrane proton channel. F(1) has five subunits: alpha(3), beta(3), gamma(1), delta(1), epsilon(1). F(0) has three main subunits: a(1), b(2) and c(10-14). The alpha and beta chains form an alternating ring which encloses part of the gamma chain. F(1) is attached to F(0) by a central stalk formed by the gamma and epsilon chains, while a peripheral stalk is formed by the delta and b chains.

The protein localises to the cell inner membrane. In terms of biological role, f(1)F(0) ATP synthase produces ATP from ADP in the presence of a proton or sodium gradient. F-type ATPases consist of two structural domains, F(1) containing the extramembraneous catalytic core and F(0) containing the membrane proton channel, linked together by a central stalk and a peripheral stalk. During catalysis, ATP synthesis in the catalytic domain of F(1) is coupled via a rotary mechanism of the central stalk subunits to proton translocation. Component of the F(0) channel, it forms part of the peripheral stalk, linking F(1) to F(0). This chain is ATP synthase subunit b, found in Verminephrobacter eiseniae (strain EF01-2).